Consider the following 535-residue polypeptide: Phosphoenolpyruvate carboxykinase (ATP) (535 aa).

Residues arginine 59, tyrosine 201, and lysine 207 each contribute to the substrate site. Residues lysine 207, histidine 226, and 243-251 each bind ATP; that span reads GLSGTGKTT. Residues lysine 207 and histidine 226 each coordinate Mn(2+). Aspartate 264 provides a ligand contact to Mn(2+). Residues glutamate 292, arginine 328, 444–445, and threonine 450 contribute to the ATP site; that span reads RI. Position 328 (arginine 328) interacts with substrate.

The protein belongs to the phosphoenolpyruvate carboxykinase (ATP) family. Requires Mn(2+) as cofactor.

The protein localises to the cytoplasm. It carries out the reaction oxaloacetate + ATP = phosphoenolpyruvate + ADP + CO2. The protein operates within carbohydrate biosynthesis; gluconeogenesis. In terms of biological role, involved in the gluconeogenesis. Catalyzes the conversion of oxaloacetate (OAA) to phosphoenolpyruvate (PEP) through direct phosphoryl transfer between the nucleoside triphosphate and OAA. The sequence is that of Phosphoenolpyruvate carboxykinase (ATP) from Porphyromonas gingivalis (strain ATCC 33277 / DSM 20709 / CIP 103683 / JCM 12257 / NCTC 11834 / 2561).